The primary structure comprises 1698 residues: Cullin-7 (1698 aa).

The segment at 315–357 is disordered; that stretch reads QASDRPRSSARSPGSIFQPQLADVSPGLPAAQAQPSFRRSRRF. Position 339 is a phosphoserine (Ser339). In terms of domain architecture, CPH spans 360–433; the sequence is RSEFASGNTY…HWHMLEILGF (74 aa). Positions 601–611 are enriched in basic and acidic residues; sequence SEDAAKVEAKE. Residues 601–623 form a disordered region; that stretch reads SEDAAKVEAKEPPSQSPNTPLQR. The DOC domain maps to 814 to 993; that stretch reads PINIPFFDVF…HTRLFYMVRA (180 aa). The segment at 1345 to 1370 is disordered; the sequence is GASGKEHKSEKEEEAGAAAVVDVAEG. Residue Lys1576 forms a Glycyl lysine isopeptide (Lys-Gly) (interchain with G-Cter in NEDD8) linkage.

This sequence belongs to the cullin family. Component of the 3M complex, composed of core components CUL7, CCDC8 and OBSL1. Component of the Cul7-RING(FBXW8) complex consisting of CUL7, RBX1, SKP1 and FBXW8. Within the Cul7-RING(FBXW8) complex interacts with FBXW8 and RBX1, but not with SKP1. Interacts with CUL1 (via the C-terminal domain); the interaction seems to be mediated by FBXW8; it is likely specific to FBXW8, but not other F-box proteins. Interacts (via the CPH domain) with p53/TP53; the interaction preferentially involves tetrameric and dimeric p53/TP53; this interaction recruits p53/TP53 for ubiquitination by neddylated CUL1-RBX1. The CUL7-CUL9 heterodimer seems to interact specifically with p53/TP53. Interacts with FBXW8; interaction is mutually exclusive of binding to CUL9 or p53/TP53. Interacts with CUL9; leading to inhibited CUL9 activity. Interacts with OBSL1. Interacts (as part of the 3M complex) with HDAC4 and HDAC5; it is negatively regulated by ANKRA2. In terms of assembly, (Microbial infection) Interacts with SV40 Large T antigen; this interaction seems to inhibit CUL7. Post-translationally, according to a report, may not be neddylated despite the conserved consensus site for neddylation at Lys-1576. Structural study of the Cul7-RING(FBXW8) reveals that both CUL7 and RBX1 are in orientations that are incompatible with neddylation. In terms of tissue distribution, highly expressed in fetal kidney and adult skeletal muscle. Also abundant in fetal brain, as well as in adult pancreas, kidney, placenta and heart. Detected in trophoblasts, lymphoblasts, osteoblasts, chondrocytes and skin fibroblasts.

The protein resides in the cytoplasm. It is found in the cytoskeleton. The protein localises to the microtubule organizing center. It localises to the centrosome. Its subcellular location is the perinuclear region. The protein resides in the golgi apparatus. The protein operates within protein modification; protein ubiquitination. Core component of the 3M and Cul7-RING(FBXW8) complexes, which mediate the ubiquitination and subsequent proteasomal degradation of target proteins. Core component of the 3M complex, a complex required to regulate microtubule dynamics and genome integrity. It is unclear how the 3M complex regulates microtubules, it could act by controlling the level of a microtubule stabilizer. The Cul7-RING(FBXW8) complex alone lacks ubiquitination activity and does not promote polyubiquitination and proteasomal degradation of p53/TP53. However it mediates recruitment of p53/TP53 for ubiquitination by neddylated CUL1-RBX1. Interaction with CUL9 is required to inhibit CUL9 activity and ubiquitination of BIRC5. The Cul7-RING(FBXW8) complex also mediates ubiquitination and consequent degradation of target proteins such as GORASP1, IRS1 and MAP4K1/HPK1. Ubiquitination of GORASP1 regulates Golgi morphogenesis and dendrite patterning in brain. Mediates ubiquitination and degradation of IRS1 in a mTOR-dependent manner: the Cul7-RING(FBXW8) complex recognizes and binds IRS1 previously phosphorylated by S6 kinase (RPS6KB1 or RPS6KB2). The Cul7-RING(FBXW8) complex also mediates ubiquitination of MAP4K1/HPK1: recognizes and binds autophosphorylated MAP4K1/HPK1, leading to its degradation, thereby affecting cell proliferation and differentiation. Acts as a regulator in trophoblast cell epithelial-mesenchymal transition and placental development. While the Cul7-RING(FBXW8) and the 3M complexes are associated and involved in common processes, CUL7 and the Cul7-RING(FBXW8) complex may have additional functions. Probably plays a role in the degradation of proteins involved in endothelial proliferation and/or differentiation. This chain is Cullin-7 (CUL7), found in Homo sapiens (Human).